The following is a 241-amino-acid chain: DnaJ homolog subfamily B member 6 (241 aa).

Positions 2 to 146 are interaction with HSP70; the sequence is VDYYEVLGVQ…TGSFFSAFSG (145 aa). The 67-residue stretch at 3 to 69 folds into the J domain; sequence DYYEVLGVQR…KKRDIYDKYG (67 aa). Residues 119–241 are interaction with KRT18; that stretch reads FEDFFGNRRG…KEQLLRLDNK (123 aa). Arginine 135 carries the post-translational modification Omega-N-methylarginine.

Homooligomer. Interacts with BAG3, HSPB8 and STUB1. Interacts with ALKBH1. Interacts with HSP70, KRT18 and PTTG.

The protein localises to the cytoplasm. It is found in the perinuclear region. The protein resides in the nucleus. It localises to the myofibril. Its subcellular location is the sarcomere. The protein localises to the z line. Functionally, has a stimulatory effect on the ATPase activity of HSP70 in a dose-dependent and time-dependent manner and hence acts as a co-chaperone of HSP70. Plays an indispensable role in the organization of KRT8/KRT18 filaments. Acts as an endogenous molecular chaperone for neuronal proteins including huntingtin. Suppresses aggregation and toxicity of polyglutamine-containing, aggregation-prone proteins. Also reduces cellular toxicity and caspase-3 activity. This is DnaJ homolog subfamily B member 6 from Macaca fascicularis (Crab-eating macaque).